The primary structure comprises 500 residues: Transcription termination factor MTERF8, chloroplastic (500 aa).

The N-terminal 64 residues, 1–64 (MVILSLVSCS…NHREPALTFR (64 aa)), are a transit peptide targeting the chloroplast.

This sequence belongs to the mTERF family.

The protein localises to the plastid. Its subcellular location is the chloroplast. Functionally, transcription termination factor that is transcriptionally active in chloroplasts. This is Transcription termination factor MTERF8, chloroplastic from Arabidopsis thaliana (Mouse-ear cress).